The following is a 203-amino-acid chain: 3-isopropylmalate dehydratase small subunit (203 aa).

This sequence belongs to the LeuD family. LeuD type 1 subfamily. In terms of assembly, heterodimer of LeuC and LeuD.

The enzyme catalyses (2R,3S)-3-isopropylmalate = (2S)-2-isopropylmalate. It functions in the pathway amino-acid biosynthesis; L-leucine biosynthesis; L-leucine from 3-methyl-2-oxobutanoate: step 2/4. In terms of biological role, catalyzes the isomerization between 2-isopropylmalate and 3-isopropylmalate, via the formation of 2-isopropylmaleate. This Phenylobacterium zucineum (strain HLK1) protein is 3-isopropylmalate dehydratase small subunit.